A 522-amino-acid chain; its full sequence is 2-isopropylmalate synthase (522 aa).

Residues 5–267 (VIIFDTTLRD…ETGINAKEIH (263 aa)) form the Pyruvate carboxyltransferase domain. Mn(2+)-binding residues include Asp14, His202, His204, and Asn238. The interval 392–522 (QLQQLVVQSD…MQKNRELGGV (131 aa)) is regulatory domain.

It belongs to the alpha-IPM synthase/homocitrate synthase family. LeuA type 1 subfamily. In terms of assembly, homodimer. Mn(2+) is required as a cofactor.

It is found in the cytoplasm. It carries out the reaction 3-methyl-2-oxobutanoate + acetyl-CoA + H2O = (2S)-2-isopropylmalate + CoA + H(+). The protein operates within amino-acid biosynthesis; L-leucine biosynthesis; L-leucine from 3-methyl-2-oxobutanoate: step 1/4. In terms of biological role, catalyzes the condensation of the acetyl group of acetyl-CoA with 3-methyl-2-oxobutanoate (2-ketoisovalerate) to form 3-carboxy-3-hydroxy-4-methylpentanoate (2-isopropylmalate). The protein is 2-isopropylmalate synthase of Shewanella baltica (strain OS155 / ATCC BAA-1091).